A 433-amino-acid chain; its full sequence is Xylose isomerase (433 aa).

Active-site residues include H99 and D102. 7 residues coordinate Mg(2+): E230, E266, H269, D294, D305, D307, and D337.

This sequence belongs to the xylose isomerase family. Homotetramer. It depends on Mg(2+) as a cofactor.

The protein resides in the cytoplasm. The catalysed reaction is alpha-D-xylose = alpha-D-xylulofuranose. In Cereibacter sphaeroides (strain ATCC 17025 / ATH 2.4.3) (Rhodobacter sphaeroides), this protein is Xylose isomerase.